A 195-amino-acid chain; its full sequence is Nucleoside triphosphate pyrophosphatase (195 aa).

The active-site Proton acceptor is Asp-76.

This sequence belongs to the Maf family. A divalent metal cation is required as a cofactor.

The protein resides in the cytoplasm. It carries out the reaction a ribonucleoside 5'-triphosphate + H2O = a ribonucleoside 5'-phosphate + diphosphate + H(+). It catalyses the reaction a 2'-deoxyribonucleoside 5'-triphosphate + H2O = a 2'-deoxyribonucleoside 5'-phosphate + diphosphate + H(+). Nucleoside triphosphate pyrophosphatase. May have a dual role in cell division arrest and in preventing the incorporation of modified nucleotides into cellular nucleic acids. This chain is Nucleoside triphosphate pyrophosphatase, found in Pelagibacter ubique (strain HTCC1062).